The sequence spans 164 residues: ATP synthase subunit b (164 aa).

A helical transmembrane segment spans residues 6–26; that stretch reads GELVGNFILVTGSVIVLLLLI.

Belongs to the ATPase B chain family. In terms of assembly, F-type ATPases have 2 components, F(1) - the catalytic core - and F(0) - the membrane proton channel. F(1) has five subunits: alpha(3), beta(3), gamma(1), delta(1), epsilon(1). F(0) has three main subunits: a(1), b(2) and c(10-14). The alpha and beta chains form an alternating ring which encloses part of the gamma chain. F(1) is attached to F(0) by a central stalk formed by the gamma and epsilon chains, while a peripheral stalk is formed by the delta and b chains.

The protein resides in the cell membrane. Functionally, f(1)F(0) ATP synthase produces ATP from ADP in the presence of a proton or sodium gradient. F-type ATPases consist of two structural domains, F(1) containing the extramembraneous catalytic core and F(0) containing the membrane proton channel, linked together by a central stalk and a peripheral stalk. During catalysis, ATP synthesis in the catalytic domain of F(1) is coupled via a rotary mechanism of the central stalk subunits to proton translocation. Its function is as follows. Component of the F(0) channel, it forms part of the peripheral stalk, linking F(1) to F(0). In Streptococcus pyogenes serotype M3 (strain ATCC BAA-595 / MGAS315), this protein is ATP synthase subunit b.